The primary structure comprises 241 residues: Exosome complex component RRP41 homolog (241 aa).

Methionine 1 carries the N-acetylmethionine modification.

The protein belongs to the RNase PH family. Component of the RNA exosome complex. Interacts with RPP4.

It is found in the cytoplasm. It localises to the nucleus. The protein localises to the nucleolus. Functionally, non-catalytic component of the RNA exosome complex which has 3'-&gt;5' exoribonuclease activity and participates in a multitude of cellular RNA processing, maturation and degradation events. In vitro, is a processive phosphorolytic exonuclease and requires a single-stranded poly(A) tail on the substrate RNA for its activity. Can complement the growth defect of a yeast mutant lacking RRP41 exonuclease. Required for normal development of female gametophytes. The polypeptide is Exosome complex component RRP41 homolog (Arabidopsis thaliana (Mouse-ear cress)).